The following is a 250-amino-acid chain: AA9 family lytic polysaccharide monooxygenase F (250 aa).

The first 18 residues, 1–18 (MHLKTFSNLLVFVATVAA), serve as a signal peptide directing secretion. His-19 is a Cu(2+) binding site. N-linked (GlcNAc...) asparagine glycosylation is found at Asn-24 and Asn-85. Cystine bridges form between Cys-70–Cys-199 and Cys-169–Cys-250. Position 108 (His-108) interacts with Cu(2+). N-linked (GlcNAc...) asparagine glycosylation is present at Asn-146. Positions 185 and 194 each coordinate O2. Residue Tyr-196 participates in Cu(2+) binding.

This sequence belongs to the polysaccharide monooxygenase AA9 family. Cu(2+) serves as cofactor.

It is found in the secreted. It carries out the reaction [(1-&gt;4)-beta-D-glucosyl]n+m + reduced acceptor + O2 = 4-dehydro-beta-D-glucosyl-[(1-&gt;4)-beta-D-glucosyl]n-1 + [(1-&gt;4)-beta-D-glucosyl]m + acceptor + H2O.. In terms of biological role, lytic polysaccharide monooxygenase (LPMO) that depolymerizes crystalline and amorphous polysaccharides via the oxidation of scissile alpha- or beta-(1-4)-glycosidic bonds, yielding C1 and C4 oxidation products. Catalysis by LPMOs requires the reduction of the active-site copper from Cu(II) to Cu(I) by a reducing agent and H(2)O(2) or O(2) as a cosubstrate. The protein is AA9 family lytic polysaccharide monooxygenase F of Botryotinia fuckeliana (strain B05.10) (Noble rot fungus).